A 209-amino-acid polypeptide reads, in one-letter code: Putative 3-methyladenine DNA glycosylase (209 aa).

The protein belongs to the DNA glycosylase MPG family.

This is Putative 3-methyladenine DNA glycosylase from Lactiplantibacillus plantarum (strain ATCC BAA-793 / NCIMB 8826 / WCFS1) (Lactobacillus plantarum).